The chain runs to 488 residues: Proline--tRNA ligase (488 aa).

The protein belongs to the class-II aminoacyl-tRNA synthetase family. ProS type 3 subfamily. In terms of assembly, homodimer.

The protein resides in the cytoplasm. The enzyme catalyses tRNA(Pro) + L-proline + ATP = L-prolyl-tRNA(Pro) + AMP + diphosphate. Catalyzes the attachment of proline to tRNA(Pro) in a two-step reaction: proline is first activated by ATP to form Pro-AMP and then transferred to the acceptor end of tRNA(Pro). This Borreliella burgdorferi (strain ZS7) (Borrelia burgdorferi) protein is Proline--tRNA ligase.